Here is a 289-residue protein sequence, read N- to C-terminus: MQVFPPPQVPLLGAHTSTAGGLHNAIYEGQEIGASTIQMFTANQRQWRRRPLTDSLINSFKTALKETSLSYIMSHAGYLINPGSPNPEILEKSRICIQQEIQDCISLGINFVNFHPGAAVNDTKETCLDRIISSFSLMEPLFENSPPLVVLFETTAGQGTLVGSNFEELSYLIDNLNHKIPVGVCIDTCHIFAAGYDITSPESWKRVLKNFDDVIGLSYLRAFHLNDSMFPLGQHKDRHAPLGEGDIGIESFKFLMTNEDTRMIPKYLETPGGPDLWAKEIRQLQSFQK.

Positions 75, 115, 153, 187, 190, 224, 237, 239, and 269 each coordinate Zn(2+).

It belongs to the AP endonuclease 2 family. Zn(2+) serves as cofactor.

The enzyme catalyses Endonucleolytic cleavage to 5'-phosphooligonucleotide end-products.. Functionally, endonuclease IV plays a role in DNA repair. It cleaves phosphodiester bonds at apurinic or apyrimidinic (AP) sites, generating a 3'-hydroxyl group and a 5'-terminal sugar phosphate. The protein is Probable endonuclease 4 of Chlamydia caviae (strain ATCC VR-813 / DSM 19441 / 03DC25 / GPIC) (Chlamydophila caviae).